Reading from the N-terminus, the 219-residue chain is Ribose-5-phosphate isomerase A (219 aa).

Substrate is bound by residues 28–31 (TGST), 81–84 (DGAD), and 94–97 (KGGG). The active-site Proton acceptor is the Glu-103. Residue Lys-121 participates in substrate binding.

Belongs to the ribose 5-phosphate isomerase family. As to quaternary structure, homodimer.

The enzyme catalyses aldehydo-D-ribose 5-phosphate = D-ribulose 5-phosphate. Its pathway is carbohydrate degradation; pentose phosphate pathway; D-ribose 5-phosphate from D-ribulose 5-phosphate (non-oxidative stage): step 1/1. Functionally, catalyzes the reversible conversion of ribose-5-phosphate to ribulose 5-phosphate. The polypeptide is Ribose-5-phosphate isomerase A (Shewanella sp. (strain MR-4)).